A 310-amino-acid polypeptide reads, in one-letter code: L-lactate dehydrogenase (310 aa).

NAD(+) contacts are provided by residues valine 11, aspartate 32, tyrosine 62, and 76–77; that span reads GV. Substrate contacts are provided by residues glutamine 79, arginine 85, and 117 to 120; that span reads NPVD. NAD(+)-binding positions include 115-117 and serine 140; that span reads ATN. Substrate is bound at residue 145 to 148; it reads DTAR. Beta-D-fructose 1,6-bisphosphate-binding residues include arginine 150 and histidine 165. Residue histidine 172 is the Proton acceptor of the active site. Tyrosine 218 is subject to Phosphotyrosine. A substrate-binding site is contributed by threonine 227.

The protein belongs to the LDH/MDH superfamily. LDH family. As to quaternary structure, homotetramer.

The protein resides in the cytoplasm. It catalyses the reaction (S)-lactate + NAD(+) = pyruvate + NADH + H(+). It functions in the pathway fermentation; pyruvate fermentation to lactate; (S)-lactate from pyruvate: step 1/1. With respect to regulation, allosterically activated by fructose 1,6-bisphosphate (FBP). Functionally, catalyzes the conversion of lactate to pyruvate. This Thermus thermophilus (strain ATCC BAA-163 / DSM 7039 / HB27) protein is L-lactate dehydrogenase.